Reading from the N-terminus, the 218-residue chain is Protein-methionine-sulfoxide reductase heme-binding subunit MsrQ (218 aa).

5 helical membrane passes run A14–W34, L60–I80, L86–L106, P121–T141, and L155–K175.

Belongs to the MsrQ family. Heterodimer of a catalytic subunit (MsrP) and a heme-binding subunit (MsrQ). It depends on FMN as a cofactor. The cofactor is heme b.

It localises to the cell inner membrane. Its function is as follows. Part of the MsrPQ system that repairs oxidized periplasmic proteins containing methionine sulfoxide residues (Met-O), using respiratory chain electrons. Thus protects these proteins from oxidative-stress damage caused by reactive species of oxygen and chlorine generated by the host defense mechanisms. MsrPQ is essential for the maintenance of envelope integrity under bleach stress, rescuing a wide series of structurally unrelated periplasmic proteins from methionine oxidation. MsrQ provides electrons for reduction to the reductase catalytic subunit MsrP, using the quinone pool of the respiratory chain. This Xanthomonas campestris pv. campestris (strain 8004) protein is Protein-methionine-sulfoxide reductase heme-binding subunit MsrQ.